The primary structure comprises 215 residues: Adenylate kinase (215 aa).

Residue 10–15 (GSGKGT) coordinates ATP. The tract at residues 30–59 (STGDILREHVRNGTELGKEAKKYMDAGQLV) is NMP. AMP is bound by residues Thr31, Arg36, 57-59 (QLV), 85-88 (GYPR), and Gln92. The tract at residues 126–162 (GRRMCKCGRSYHIIFNPPKVPGKCDECGGELYHRDDD) is LID. An ATP-binding site is contributed by Arg127. Positions 130 and 132 each coordinate Zn(2+). 135 to 136 (SY) contributes to the ATP binding site. Zn(2+)-binding residues include Cys149 and Cys152. Residues Arg159 and Arg170 each coordinate AMP. Gly198 contacts ATP.

It belongs to the adenylate kinase family. Monomer.

Its subcellular location is the cytoplasm. The enzyme catalyses AMP + ATP = 2 ADP. The protein operates within purine metabolism; AMP biosynthesis via salvage pathway; AMP from ADP: step 1/1. Its function is as follows. Catalyzes the reversible transfer of the terminal phosphate group between ATP and AMP. Plays an important role in cellular energy homeostasis and in adenine nucleotide metabolism. The sequence is that of Adenylate kinase from Methanothrix thermoacetophila (strain DSM 6194 / JCM 14653 / NBRC 101360 / PT) (Methanosaeta thermophila).